The primary structure comprises 345 residues: Phosphoribosylformylglycinamidine cyclo-ligase (345 aa).

The protein belongs to the AIR synthase family.

It is found in the cytoplasm. The catalysed reaction is 2-formamido-N(1)-(5-O-phospho-beta-D-ribosyl)acetamidine + ATP = 5-amino-1-(5-phospho-beta-D-ribosyl)imidazole + ADP + phosphate + H(+). The protein operates within purine metabolism; IMP biosynthesis via de novo pathway; 5-amino-1-(5-phospho-D-ribosyl)imidazole from N(2)-formyl-N(1)-(5-phospho-D-ribosyl)glycinamide: step 2/2. The protein is Phosphoribosylformylglycinamidine cyclo-ligase of Escherichia coli (strain SE11).